A 354-amino-acid polypeptide reads, in one-letter code: Uroporphyrinogen decarboxylase (354 aa).

Residues 27–31, Asp-77, Tyr-154, Thr-209, and His-327 each bind substrate; that span reads RQAGR.

It belongs to the uroporphyrinogen decarboxylase family. In terms of assembly, homodimer.

Its subcellular location is the cytoplasm. The enzyme catalyses uroporphyrinogen III + 4 H(+) = coproporphyrinogen III + 4 CO2. Its pathway is porphyrin-containing compound metabolism; protoporphyrin-IX biosynthesis; coproporphyrinogen-III from 5-aminolevulinate: step 4/4. Functionally, catalyzes the decarboxylation of four acetate groups of uroporphyrinogen-III to yield coproporphyrinogen-III. The polypeptide is Uroporphyrinogen decarboxylase (Shigella dysenteriae serotype 1 (strain Sd197)).